A 343-amino-acid polypeptide reads, in one-letter code: Protein RecA (343 aa).

ATP is bound at residue 64–71; sequence GPESSGKT.

This sequence belongs to the RecA family.

The protein localises to the cytoplasm. In terms of biological role, can catalyze the hydrolysis of ATP in the presence of single-stranded DNA, the ATP-dependent uptake of single-stranded DNA by duplex DNA, and the ATP-dependent hybridization of homologous single-stranded DNAs. It interacts with LexA causing its activation and leading to its autocatalytic cleavage. The sequence is that of Protein RecA from Bacillus cereus (strain ATCC 14579 / DSM 31 / CCUG 7414 / JCM 2152 / NBRC 15305 / NCIMB 9373 / NCTC 2599 / NRRL B-3711).